Consider the following 578-residue polypeptide: Potassium-transporting ATPase potassium-binding subunit (578 aa).

Transmembrane regions (helical) follow at residues 3–23 (AAAL…AVPL), 67–87 (AAAA…LERL), 95–115 (PAGL…SFAT), 136–156 (ALTV…AALV), 181–201 (LLLP…VPQT), 264–284 (LEAL…GALV), 291–311 (WTVY…TVSA), 396–416 (GLYG…LMVG), 436–456 (LAIL…CLLP), 504–524 (VAML…AGAF), and 543–563 (LFAG…FLPA).

It belongs to the KdpA family. The system is composed of three essential subunits: KdpA, KdpB and KdpC.

It is found in the cell inner membrane. Its function is as follows. Part of the high-affinity ATP-driven potassium transport (or Kdp) system, which catalyzes the hydrolysis of ATP coupled with the electrogenic transport of potassium into the cytoplasm. This subunit binds the periplasmic potassium ions and delivers the ions to the membrane domain of KdpB through an intramembrane tunnel. This is Potassium-transporting ATPase potassium-binding subunit from Anaeromyxobacter dehalogenans (strain 2CP-C).